A 93-amino-acid polypeptide reads, in one-letter code: UPF0250 protein PA3998 (93 aa).

This sequence belongs to the UPF0250 family.

This chain is UPF0250 protein PA3998, found in Pseudomonas aeruginosa (strain ATCC 15692 / DSM 22644 / CIP 104116 / JCM 14847 / LMG 12228 / 1C / PRS 101 / PAO1).